The sequence spans 163 residues: D-aminoacyl-tRNA deacylase (163 aa).

The Gly-cisPro motif, important for rejection of L-amino acids signature appears at 141 to 142 (GP).

It belongs to the DTD family. Homodimer.

The protein localises to the cytoplasm. The catalysed reaction is glycyl-tRNA(Ala) + H2O = tRNA(Ala) + glycine + H(+). The enzyme catalyses a D-aminoacyl-tRNA + H2O = a tRNA + a D-alpha-amino acid + H(+). An aminoacyl-tRNA editing enzyme that deacylates mischarged D-aminoacyl-tRNAs. Also deacylates mischarged glycyl-tRNA(Ala), protecting cells against glycine mischarging by AlaRS. Acts via tRNA-based rather than protein-based catalysis; rejects L-amino acids rather than detecting D-amino acids in the active site. By recycling D-aminoacyl-tRNA to D-amino acids and free tRNA molecules, this enzyme counteracts the toxicity associated with the formation of D-aminoacyl-tRNA entities in vivo and helps enforce protein L-homochirality. This chain is D-aminoacyl-tRNA deacylase, found in Neisseria meningitidis serogroup A / serotype 4A (strain DSM 15465 / Z2491).